Reading from the N-terminus, the 213-residue chain is Small ribosomal subunit protein uS4 (213 aa).

The interval 16–53 is disordered; that stretch reads GTDLGLKSGVKPYDVKTKKSARPPGQHGVSRNKSSEYS. A compositionally biased stretch (polar residues) spans 44–53; it reads VSRNKSSEYS. Residues 97-163 form the S4 RNA-binding domain; that stretch reads SRLDNVVYRM…EKSREQLRIK (67 aa).

The protein belongs to the universal ribosomal protein uS4 family. As to quaternary structure, part of the 30S ribosomal subunit. Contacts protein S5. The interaction surface between S4 and S5 is involved in control of translational fidelity.

Its function is as follows. One of the primary rRNA binding proteins, it binds directly to 16S rRNA where it nucleates assembly of the body of the 30S subunit. Functionally, with S5 and S12 plays an important role in translational accuracy. The polypeptide is Small ribosomal subunit protein uS4 (Psychrobacter cryohalolentis (strain ATCC BAA-1226 / DSM 17306 / VKM B-2378 / K5)).